We begin with the raw amino-acid sequence, 322 residues long: Breast cancer metastasis-suppressor 1-like protein (322 aa).

Basic and acidic residues predominate over residues 1–16 (MPVHSREKKESNHNDM). Residues 1–56 (MPVHSREKKESNHNDMEVDYPENEGSSSEEDDSDSSSGSEEGDSSEMDDEDCERRR) form a disordered region. A compositionally biased stretch (acidic residues) spans 17-51 (EVDYPENEGSSSEEDDSDSSSGSEEGDSSEMDDED). Coiled-coil stretches lie at residues 50 to 99 (EDCE…QAQE) and 147 to 178 (EKLL…ITSE).

The protein belongs to the BRMS1 family.

It localises to the nucleus. In terms of biological role, involved in the histone deacetylase (HDAC1)-dependent transcriptional repression activity. This is Breast cancer metastasis-suppressor 1-like protein (brms1l) from Xenopus laevis (African clawed frog).